The following is a 2531-amino-acid chain: Highly reducing polyketide synthase gloL (2531 aa).

The 421-residue stretch at 15–435 (YEPLAIVGMG…GANAHVILDS (421 aa)) folds into the Ketosynthase family 3 (KS3) domain. Active-site for beta-ketoacyl synthase activity residues include C187, H322, and H358. The interval 449-525 (TNGLSVNGHS…GHSVNGHSKP (77 aa)) is disordered. Positions 453–503 (SVNGHSINGNSVNGHSVNGHSTNGHSINGNSVNGHSVNGNSVNGHSTNGHS) are enriched in low complexity. Residues 505–521 (NGHSANGNSINGHSVNG) show a composition bias toward polar residues. The segment at 602 to 909 (MVFTGQGAQW…VTALERGKDC (308 aa)) is malonyl-CoA:ACP transacylase (MAT) domain. The interval 971-1099 (HEILGSRTVE…GQIRSGTDNP (129 aa)) is N-terminal hotdog fold. Residues 971–1251 (HEILGSRTVE…GGQFSPIEED (281 aa)) are dehydratase (DH) domain. The 284-residue stretch at 971–1254 (HEILGSRTVE…FSPIEEDSSD (284 aa)) folds into the PKS/mFAS DH domain. The active-site Proton acceptor; for dehydratase activity is the H1003. Residues 1109–1254 (DHPRSVPSPY…FSPIEEDSSD (146 aa)) form a C-terminal hotdog fold region. D1169 acts as the Proton donor; for dehydratase activity in catalysis. A methyltransferase (CMet) domain region spans residues 1419–1597 (DFFTAAGHSK…FSGCDATVYD (179 aa)). Positions 1806-2114 (GLLQTLRWVP…KGSHIGKIVV (309 aa)) are enoyl reductase (ER) (ER) domain. Residues 2139-2312 (GYLLVGGLGG…ASVVDIGVMG (174 aa)) are ketoreductase (KR) domain. Positions 2413–2505 (MSSVETDSSI…ALGLLTIEGL (93 aa)) constitute a Carrier domain. Position 2464 is an O-(pantetheine 4'-phosphoryl)serine (S2464).

It functions in the pathway mycotoxin biosynthesis. In terms of biological role, highly reducing polyketide synthase; part of the gene cluster that mediates the biosynthesis of pneumocandins, lipohexapeptides of the echinocandin family that prevent fungal cell wall formation by non-competitive inhibition of beta-1,3-glucan synthase. The 10,12-dimethylmyristoyl side chain is synthesized by the reducing polyketide synthase gloL/GLPKS4. The thioesterase gloN/GLHYD exclusively interacts with gloL/GLPKS4 to maintain turnover of the polyketide side chain. The 10R,12S-dimethylmyristic acid is then transferred to the first thiolation domain of the nonribosomal peptide synthetase gloA/GLNRPS4 by the acyl-AMP ligase gloD/GLligase, followed by its acylation to L-ornithine to trigger elongation of the cyclic hexapeptide. L-ornithine, 4R-hydroxyl-L-proline (generated from L-proline by the dioxygenase gloF/GLOXY2), 3S-hydroxyl-L-homotyrosine (generated by gloG/GLHtyB, gloH/GLHtyA, gloI/GLHtyC, gloJ/GLHtyD and hydroxylated at C-3 by the dioxygenase gloM/GLOXY1), 3R-hydroxyl-L-glutamine (generated from L-glutamine probably by the dioxygenase gloE/GLOXY3) and 3S-hydroxyl-L-proline (generated from L-proline by the dioxygenase gloF/GLOXY2 to yield pneumocandin B0), or 3S-hydroxyl-4S-methyl-L-proline (generated from L-leucine by the dioxygenase gloC/GLOXY4 to yield pneumocandin A0) are sequentially added to the growing chain. The last C domain of gloA/GLNRPS4 is proposed to be responsible for cyclization by condensation to form the peptide bond between L-ornithine and 3S-hydroxyl-4S-methyl-L-proline (for pneumocandin A0) or 3S-hydroxyl-L-proline (for pneumocandin B0). Finally, the subsequent C-4 hydroxylation of 3S-hydroxyl-L-homotyrosine and L-ornithine dihydroxylation at C-4 and C-5 are performed by the cytochrome P450 monooxygenases gloP/GLP450-1 and gloO/GLP450-2, respectively. This Glarea lozoyensis (strain ATCC 20868 / MF5171) protein is Highly reducing polyketide synthase gloL.